Here is a 241-residue protein sequence, read N- to C-terminus: Uracil-DNA glycosylase (241 aa).

D68 functions as the Proton acceptor in the catalytic mechanism.

The protein belongs to the uracil-DNA glycosylase (UDG) superfamily. UNG family.

The protein localises to the cytoplasm. It catalyses the reaction Hydrolyzes single-stranded DNA or mismatched double-stranded DNA and polynucleotides, releasing free uracil.. Functionally, excises uracil residues from the DNA which can arise as a result of misincorporation of dUMP residues by DNA polymerase or due to deamination of cytosine. The sequence is that of Uracil-DNA glycosylase from Rhizobium meliloti (strain 1021) (Ensifer meliloti).